The sequence spans 197 residues: DNA helicase/primase complex protein (197 aa).

This sequence belongs to the herpesviridae UL52 family.

Functionally, involved in DNA replication. This Equus caballus (Horse) protein is DNA helicase/primase complex protein (7).